A 217-amino-acid chain; its full sequence is Coiled-coil domain-containing protein 124 (217 aa).

The interval 1–120 is disordered; it reads MPKKFQGENS…PVEKAKSHLE (120 aa). Residues 15–82 adopt a coiled-coil conformation; the sequence is ARARRAEAKA…LLEEEDSRLK (68 aa). 2 stretches are compositionally biased toward basic and acidic residues: residues 18–74 and 98–120; these read RRAE…QRLL and QIED…SHLE. Residues S136 and S188 each carry the phosphoserine modification.

Belongs to the CCDC124 family. In terms of assembly, associates with translationally inactive ribosomes in the nonrotated state. Interacts with RASGEF1B.

The protein resides in the cytoplasm. Its subcellular location is the cytoskeleton. It is found in the microtubule organizing center. It localises to the centrosome. The protein localises to the midbody. In terms of biological role, ribosome-binding protein involved in ribosome hibernation: associates with translationally inactive ribosomes and stabilizes the nonrotated conformation of the 80S ribosome, thereby promoting ribosome preservation and storage. Also required for proper progression of late cytokinetic stages. The protein is Coiled-coil domain-containing protein 124 (Ccdc124) of Mus musculus (Mouse).